Consider the following 248-residue polypeptide: Pyridoxine 5'-phosphate synthase (248 aa).

Asn-12 serves as a coordination point for 3-amino-2-oxopropyl phosphate. Asp-14–His-15 contacts 1-deoxy-D-xylulose 5-phosphate. Arg-23 serves as a coordination point for 3-amino-2-oxopropyl phosphate. Catalysis depends on His-48, which acts as the Proton acceptor. 2 residues coordinate 1-deoxy-D-xylulose 5-phosphate: Arg-50 and His-55. The active-site Proton acceptor is the Glu-75. Thr-105 contacts 1-deoxy-D-xylulose 5-phosphate. The Proton donor role is filled by His-196. Residues Gly-197 and Gly-218 to His-219 each bind 3-amino-2-oxopropyl phosphate.

Belongs to the PNP synthase family. As to quaternary structure, homooctamer; tetramer of dimers.

The protein localises to the cytoplasm. The enzyme catalyses 3-amino-2-oxopropyl phosphate + 1-deoxy-D-xylulose 5-phosphate = pyridoxine 5'-phosphate + phosphate + 2 H2O + H(+). Its pathway is cofactor biosynthesis; pyridoxine 5'-phosphate biosynthesis; pyridoxine 5'-phosphate from D-erythrose 4-phosphate: step 5/5. Its function is as follows. Catalyzes the complicated ring closure reaction between the two acyclic compounds 1-deoxy-D-xylulose-5-phosphate (DXP) and 3-amino-2-oxopropyl phosphate (1-amino-acetone-3-phosphate or AAP) to form pyridoxine 5'-phosphate (PNP) and inorganic phosphate. In Pseudomonas aeruginosa (strain UCBPP-PA14), this protein is Pyridoxine 5'-phosphate synthase.